The sequence spans 432 residues: Transcriptional adapter 3-A (432 aa).

Disordered stretches follow at residues 90–127 (HELGTPIKHSKPKKQKLDGKVSHASGPGPGRPKSRNMQ) and 275–314 (SPVEDSPIPEISGKESGTDGASTSPRSQNKPFSAPHTKSL). Positions 293–305 (DGASTSPRSQNKP) are enriched in polar residues. Residues 335–398 (ADDSEDEVLA…NEVMDAFRKI (64 aa)) are a coiled coil.

Belongs to the NGG1 family.

Its subcellular location is the nucleus. Functions as a component of the PCAF complex. The PCAF complex is capable of efficiently acetylating histones in a nucleosomal context. The protein is Transcriptional adapter 3-A (tada3-a) of Xenopus laevis (African clawed frog).